Here is a 363-residue protein sequence, read N- to C-terminus: 3-isopropylmalate dehydrogenase (363 aa).

78-91 (XXXXXXXXXXXXXX) is a binding site for NAD(+). Substrate contacts are provided by Arg-99, Arg-109, Arg-138, and Asp-227. 3 residues coordinate Mg(2+): Asp-227, Asp-251, and Asp-255. 285–297 (GSAPDIEGKNIAN) contributes to the NAD(+) binding site.

The protein belongs to the isocitrate and isopropylmalate dehydrogenases family. LeuB type 1 subfamily. As to quaternary structure, homodimer. Requires Mg(2+) as cofactor. The cofactor is Mn(2+).

Its subcellular location is the cytoplasm. The catalysed reaction is (2R,3S)-3-isopropylmalate + NAD(+) = 4-methyl-2-oxopentanoate + CO2 + NADH. The protein operates within amino-acid biosynthesis; L-leucine biosynthesis; L-leucine from 3-methyl-2-oxobutanoate: step 3/4. Its function is as follows. Catalyzes the oxidation of 3-carboxy-2-hydroxy-4-methylpentanoate (3-isopropylmalate) to 3-carboxy-4-methyl-2-oxopentanoate. The product decarboxylates to 4-methyl-2 oxopentanoate. The polypeptide is 3-isopropylmalate dehydrogenase (Buchnera aphidicola subsp. Uroleucon solidaginis).